The primary structure comprises 150 residues: Troponin C, isoform 2B (150 aa).

Met-1 is modified (N-acetylmethionine). EF-hand domains are found at residues 7-42 (EQLS…MGVK), 43-78 (ISEK…FLIE), 83-118 (ALKA…LDNR), and 119-150 (LTEE…MMNG). Ca(2+)-binding residues include Asp-56, Asp-58, Ser-60, Glu-62, and Glu-67. Residues Asp-132, Asp-134, Ser-136, Thr-138, and Glu-143 each coordinate Ca(2+).

This sequence belongs to the troponin C family.

Its function is as follows. Troponin is the central regulatory protein of striated muscle contraction. Tn consists of three components: Tn-I which is the inhibitor of actomyosin ATPase, Tn-T which contains the binding site for tropomyosin and Tn-C. The binding of calcium to Tn-C abolishes the inhibitory action of Tn on actin filaments. The sequence is that of Troponin C, isoform 2B from Homarus americanus (American lobster).